The sequence spans 286 residues: ATP synthase gamma chain (286 aa).

This sequence belongs to the ATPase gamma chain family. In terms of assembly, F-type ATPases have 2 components, CF(1) - the catalytic core - and CF(0) - the membrane proton channel. CF(1) has five subunits: alpha(3), beta(3), gamma(1), delta(1), epsilon(1). CF(0) has three main subunits: a, b and c.

It is found in the cell inner membrane. Functionally, produces ATP from ADP in the presence of a proton gradient across the membrane. The gamma chain is believed to be important in regulating ATPase activity and the flow of protons through the CF(0) complex. The sequence is that of ATP synthase gamma chain from Flavobacterium johnsoniae (strain ATCC 17061 / DSM 2064 / JCM 8514 / BCRC 14874 / CCUG 350202 / NBRC 14942 / NCIMB 11054 / UW101) (Cytophaga johnsonae).